The chain runs to 807 residues: Dual specificity protein phosphatase PPS1 (807 aa).

Positions 585–783 (LPSRILRHLY…LFKWWKKHYN (199 aa)) constitute a Tyrosine-protein phosphatase domain. Residues 593–807 (LYLGSLDHAQ…GIAEVNMKYT (215 aa)) form a catalytic region. The active-site Phosphocysteine intermediate is cysteine 725.

Belongs to the protein-tyrosine phosphatase family. Non-receptor class dual specificity subfamily.

The enzyme catalyses O-phospho-L-tyrosyl-[protein] + H2O = L-tyrosyl-[protein] + phosphate. The catalysed reaction is O-phospho-L-seryl-[protein] + H2O = L-seryl-[protein] + phosphate. It carries out the reaction O-phospho-L-threonyl-[protein] + H2O = L-threonyl-[protein] + phosphate. Protein phosphatase with specificity for serine, threonine, and tyrosine residues; has a role in the DNA synthesis phase of the cell cycle. The polypeptide is Dual specificity protein phosphatase PPS1 (PPS1) (Saccharomyces cerevisiae (strain ATCC 204508 / S288c) (Baker's yeast)).